A 427-amino-acid chain; its full sequence is Tyrosine--tRNA ligase (427 aa).

Position 33 (Tyr33) interacts with L-tyrosine. A 'HIGH' region motif is present at residues 38-47; that stretch reads PTAPSLHVGN. L-tyrosine is bound by residues Tyr168 and Gln172. Residues 228-232 carry the 'KMSKS' region motif; it reads KFGKS. Lys231 contacts ATP. The 69-residue stretch at 358-426 folds into the S4 RNA-binding domain; the sequence is EHMLDLVAST…GKKHHYLIKV (69 aa).

The protein belongs to the class-I aminoacyl-tRNA synthetase family. TyrS type 1 subfamily. Homodimer.

The protein localises to the cytoplasm. It carries out the reaction tRNA(Tyr) + L-tyrosine + ATP = L-tyrosyl-tRNA(Tyr) + AMP + diphosphate + H(+). In terms of biological role, catalyzes the attachment of tyrosine to tRNA(Tyr) in a two-step reaction: tyrosine is first activated by ATP to form Tyr-AMP and then transferred to the acceptor end of tRNA(Tyr). This chain is Tyrosine--tRNA ligase, found in Amoebophilus asiaticus (strain 5a2).